The sequence spans 301 residues: Glycosyltransferase GlyG (301 aa).

This sequence belongs to the glycosyltransferase 2 family.

The protein operates within protein modification; protein glycosylation. Involved in the polymorphic O-glycosylation of the serine-rich repeat protein PsrP. Catalyzes the third step in glycosylation PsrP in this bacteria. Transfers glucose from UDP-glucose to the terminal glucose moiety of already-glycosylated PsrP (using truncated substrates with PsrP SSR1-GlcNAc-Glc). Has a marked preference for PsrP substrate that has already been modified by GlcNAc and glucose. In vitro has hydrolytic activity against UDP-glucose and to a lesser extent against UDP-galactose. Its function is as follows. Also catalyzes the fourth step in glycosylation of the serine-rich repeat protein PsrP in this bacteria. Can transfer the sugar from UDP-glucose (and much less well from UDP-galactose) to the terminal sugar moiety of PsrP-GlcNAc-Glc-Gal or of PsrP-GlcNAc-Glc-Glc. This chain is Glycosyltransferase GlyG, found in Streptococcus pneumoniae serotype 4 (strain ATCC BAA-334 / TIGR4).